The sequence spans 1037 residues: Serine/threonine-protein kinase ULK2 (1037 aa).

One can recognise a Protein kinase domain in the interval 9–271 (YCKRDLVGHG…FEAFFSHPFL (263 aa)). ATP contacts are provided by residues 15-23 (VGHGAFAVV) and Lys-39. Asp-131 acts as the Proton acceptor in catalysis. The tract at residues 319-350 (ENLSSPPLGPPNYLQVSKDSASNSSKNSSCDT) is disordered. The span at 335–348 (SKDSASNSSKNSSC) shows a compositional bias: low complexity. A Phosphoserine modification is found at Ser-430. Disordered regions lie at residues 452 to 480 (CSPV…PSPL), 494 to 515 (GHPQ…PQTQ), 540 to 594 (QKLR…KTPL), and 626 to 697 (HGPA…NTER). 2 stretches are compositionally biased toward polar residues: residues 506–515 (SSGSPVPQTQ) and 571–585 (LGTS…SPRN). Basic and acidic residues predominate over residues 632–643 (QSKDGNDPRECS). Residues 658–678 (QQQSKAVFGRSVSTGKLSEQQ) are compositionally biased toward polar residues. A phosphoserine mark is found at Ser-772 and Ser-781. Positions 813 to 1037 (ELPEETLMER…SALCCSTATV (225 aa)) are CTD-like region.

This sequence belongs to the protein kinase superfamily. Ser/Thr protein kinase family. APG1/unc-51/ULK1 subfamily. Component of a complex consisting of ATG13/KIAA0652, ULK1 and RB1CC1/FIP200. Interacts (via C-terminus) with ATG13/KIAA0652. Associates with the mammalian target of rapamycin complex 1 (mTORC1) through an interaction with RPTOR. Interacts with SYNGAP1. Post-translationally, autophosphorylated. In response to nutrient limitation, probably phosphorylated and activated by AMPK, leading to activate autophagy. As to expression, widely expressed.

It localises to the cytoplasmic vesicle membrane. The catalysed reaction is L-seryl-[protein] + ATP = O-phospho-L-seryl-[protein] + ADP + H(+). It carries out the reaction L-threonyl-[protein] + ATP = O-phospho-L-threonyl-[protein] + ADP + H(+). Its function is as follows. Serine/threonine-protein kinase involved in autophagy in response to starvation. Acts upstream of phosphatidylinositol 3-kinase PIK3C3 to regulate the formation of autophagophores, the precursors of autophagosomes. Part of regulatory feedback loops in autophagy: acts both as a downstream effector and a negative regulator of mammalian target of rapamycin complex 1 (mTORC1) via interaction with RPTOR. Activated via phosphorylation by AMPK, also acts as a negative regulator of AMPK through phosphorylation of the AMPK subunits PRKAA1, PRKAB2 and PRKAG1. May phosphorylate ATG13/KIAA0652, FRS2, FRS3 and RPTOR; however such data need additional evidences. Not involved in ammonia-induced autophagy or in autophagic response of cerebellar granule neurons (CGN) to low potassium concentration. Plays a role early in neuronal differentiation and is required for granule cell axon formation: may govern axon formation via Ras-like GTPase signaling and through regulation of the Rab5-mediated endocytic pathways within developing axons. This chain is Serine/threonine-protein kinase ULK2 (Ulk2), found in Mus musculus (Mouse).